The primary structure comprises 81 residues: Photosystem I iron-sulfur center (81 aa).

2 consecutive 4Fe-4S ferredoxin-type domains span residues 2–31 (SHAVKIYDTCIGCTQCVRACPLDVLEMVPW) and 37–68 (GQIASSPRTEDCVGCKRCETACPTDFLSIRVY). Residues Cys11, Cys14, Cys17, Cys21, Cys48, Cys51, Cys54, and Cys58 each coordinate [4Fe-4S] cluster.

The cyanobacterial PSI reaction center is composed of one copy each of PsaA,B,C,D,E,F,I,J,K,L,M and X, and forms trimeric complexes. The cofactor is [4Fe-4S] cluster.

The protein resides in the cellular thylakoid membrane. The catalysed reaction is reduced [plastocyanin] + hnu + oxidized [2Fe-2S]-[ferredoxin] = oxidized [plastocyanin] + reduced [2Fe-2S]-[ferredoxin]. Its function is as follows. Apoprotein for the two 4Fe-4S centers FA and FB of photosystem I (PSI); essential for photochemical activity. FB is the terminal electron acceptor of PSI, donating electrons to ferredoxin. The C-terminus interacts with PsaA/B/D and helps assemble the protein into the PSI complex. Required for binding of PsaD and PsaE to PSI. PSI is a plastocyanin/cytochrome c6-ferredoxin oxidoreductase, converting photonic excitation into a charge separation, which transfers an electron from the donor P700 chlorophyll pair to the spectroscopically characterized acceptors A0, A1, FX, FA and FB in turn. The protein is Photosystem I iron-sulfur center of Prochlorococcus marinus subsp. pastoris (strain CCMP1986 / NIES-2087 / MED4).